Reading from the N-terminus, the 299-residue chain is Small ribosomal subunit protein uS2 (299 aa).

Residues 259–291 (AAASAAGPTSWEADGADWAASSAPAAAGESWAE) are compositionally biased toward low complexity. A disordered region spans residues 259–299 (AAASAAGPTSWEADGADWAASSAPAAAGESWAETQPAEGKW).

It belongs to the universal ribosomal protein uS2 family. Component of the small ribosomal subunit. Mature ribosomes consist of a small (40S) and a large (60S) subunit. The 40S subunit contains about 33 different proteins and 1 molecule of RNA (18S). The 60S subunit contains about 49 different proteins and 3 molecules of RNA (25S, 5.8S and 5S). Interacts with rps21.

Its subcellular location is the cytoplasm. Required for the assembly and/or stability of the 40S ribosomal subunit. Required for the processing of the 20S rRNA-precursor to mature 18S rRNA in a late step of the maturation of 40S ribosomal subunits. This chain is Small ribosomal subunit protein uS2 (rps0), found in Aspergillus flavus (strain ATCC 200026 / FGSC A1120 / IAM 13836 / NRRL 3357 / JCM 12722 / SRRC 167).